We begin with the raw amino-acid sequence, 388 residues long: Succinate--CoA ligase [ADP-forming] subunit beta (388 aa).

Residues 9–244 form the ATP-grasp domain; that stretch reads KQLFARYGLP…QSQEDPREAQ (236 aa). ATP-binding positions include lysine 46, 53 to 55, glutamate 99, threonine 102, and glutamate 107; that span reads GRG. 2 residues coordinate Mg(2+): asparagine 199 and aspartate 213. Substrate contacts are provided by residues asparagine 264 and 321-323; that span reads GIV.

The protein belongs to the succinate/malate CoA ligase beta subunit family. As to quaternary structure, heterotetramer of two alpha and two beta subunits. It depends on Mg(2+) as a cofactor.

It catalyses the reaction succinate + ATP + CoA = succinyl-CoA + ADP + phosphate. It carries out the reaction GTP + succinate + CoA = succinyl-CoA + GDP + phosphate. The protein operates within carbohydrate metabolism; tricarboxylic acid cycle; succinate from succinyl-CoA (ligase route): step 1/1. Functionally, succinyl-CoA synthetase functions in the citric acid cycle (TCA), coupling the hydrolysis of succinyl-CoA to the synthesis of either ATP or GTP and thus represents the only step of substrate-level phosphorylation in the TCA. The beta subunit provides nucleotide specificity of the enzyme and binds the substrate succinate, while the binding sites for coenzyme A and phosphate are found in the alpha subunit. The protein is Succinate--CoA ligase [ADP-forming] subunit beta of Salmonella arizonae (strain ATCC BAA-731 / CDC346-86 / RSK2980).